Consider the following 394-residue polypeptide: NAD(P)H-quinone oxidoreductase subunit H (394 aa).

This sequence belongs to the complex I 49 kDa subunit family. NDH-1 can be composed of about 15 different subunits; different subcomplexes with different compositions have been identified which probably have different functions.

It localises to the cellular thylakoid membrane. It catalyses the reaction a plastoquinone + NADH + (n+1) H(+)(in) = a plastoquinol + NAD(+) + n H(+)(out). It carries out the reaction a plastoquinone + NADPH + (n+1) H(+)(in) = a plastoquinol + NADP(+) + n H(+)(out). In terms of biological role, NDH-1 shuttles electrons from an unknown electron donor, via FMN and iron-sulfur (Fe-S) centers, to quinones in the respiratory and/or the photosynthetic chain. The immediate electron acceptor for the enzyme in this species is believed to be plastoquinone. Couples the redox reaction to proton translocation, and thus conserves the redox energy in a proton gradient. Cyanobacterial NDH-1 also plays a role in inorganic carbon-concentration. The chain is NAD(P)H-quinone oxidoreductase subunit H from Parasynechococcus marenigrum (strain WH8102).